A 265-amino-acid polypeptide reads, in one-letter code: Apolipoprotein A-I (265 aa).

The signal sequence occupies residues 1–18 (MKAVVLTLAVLFLTGSQA). Tandem repeats lie at residues 67 to 88 (LKLLDNWDSLGSTFTKVREQLG) and 89 to 110 (PVTQEFWDNLEKETEALRQEMS). A 10 X approximate tandem repeats region spans residues 67–265 (LKLLDNWDSL…DEASKKLNAQ (199 aa)). M109 is modified (methionine sulfoxide). A 3; half-length repeat occupies 111–121 (KDLEEVKKKVQ). 5 repeat units span residues 122–142 (PYLDDFQNKWQEEMETYRQKM), 144–165 (PLGAEFREGARQKVQELQEKLS), 166–187 (PLAEELRDRLRAHVEALRQHVA), 188–209 (PYSDDLRQRMAARFEALKEGGG), and 210–230 (SLAEYQAKAQEQLKALGEKAK). The residue at position 135 (M135) is a Methionine sulfoxide. One copy of the 9; half-length repeat lies at 231-241 (PALEDLRQGLL). Copy 10 of the repeat occupies 242 to 265 (PVLENLKVSILAAIDEASKKLNAQ).

Belongs to the apolipoprotein A1/A4/E family. In terms of assembly, homodimer. Interacts with APOA1BP and CLU. Component of a sperm activating protein complex (SPAP), consisting of APOA1, an immunoglobulin heavy chain, an immunoglobulin light chain and albumin. Interacts with NDRG1. Interacts with SCGB3A2. Interacts with NAXE and YJEFN3. Post-translationally, glycosylated. In terms of processing, palmitoylated. Phosphorylation sites are present in the extracellular medium. Major protein of plasma HDL, also found in chylomicrons. Synthesized predominantly in the intestine and the liver.

The protein resides in the secreted. Functionally, participates in the reverse transport of cholesterol from tissues to the liver for excretion by promoting cholesterol efflux from tissues and by acting as a cofactor for the lecithin cholesterol acyltransferase (LCAT). As part of the SPAP complex, activates spermatozoa motility. The protein is Apolipoprotein A-I (APOA1) of Sus scrofa (Pig).